A 598-amino-acid chain; its full sequence is Elongation factor 4 (598 aa).

Residues 2-184 (KNIRNFSIIA…EIVAKIPAPE (183 aa)) form the tr-type G domain. GTP contacts are provided by residues 14–19 (DHGKST) and 131–134 (NKID).

Belongs to the TRAFAC class translation factor GTPase superfamily. Classic translation factor GTPase family. LepA subfamily.

The protein resides in the cell inner membrane. The catalysed reaction is GTP + H2O = GDP + phosphate + H(+). Its function is as follows. Required for accurate and efficient protein synthesis under certain stress conditions. May act as a fidelity factor of the translation reaction, by catalyzing a one-codon backward translocation of tRNAs on improperly translocated ribosomes. Back-translocation proceeds from a post-translocation (POST) complex to a pre-translocation (PRE) complex, thus giving elongation factor G a second chance to translocate the tRNAs correctly. Binds to ribosomes in a GTP-dependent manner. This is Elongation factor 4 from Haemophilus influenzae (strain 86-028NP).